We begin with the raw amino-acid sequence, 173 residues long: Peptide deformylase (173 aa).

Positions 98 and 140 each coordinate Fe cation. The active site involves Glu-141. His-144 contributes to the Fe cation binding site.

The protein belongs to the polypeptide deformylase family. It depends on Fe(2+) as a cofactor.

The catalysed reaction is N-terminal N-formyl-L-methionyl-[peptide] + H2O = N-terminal L-methionyl-[peptide] + formate. In terms of biological role, removes the formyl group from the N-terminal Met of newly synthesized proteins. Requires at least a dipeptide for an efficient rate of reaction. N-terminal L-methionine is a prerequisite for activity but the enzyme has broad specificity at other positions. This chain is Peptide deformylase, found in Caulobacter vibrioides (strain ATCC 19089 / CIP 103742 / CB 15) (Caulobacter crescentus).